The sequence spans 120 residues: Small ribosomal subunit protein eS24 (120 aa).

A disordered region spans residues 101-120; it reads RDAGTKQKKGGSKGGQGAKG.

This sequence belongs to the eukaryotic ribosomal protein eS24 family.

This Saccharolobus islandicus (strain Y.N.15.51 / Yellowstone #2) (Sulfolobus islandicus) protein is Small ribosomal subunit protein eS24.